We begin with the raw amino-acid sequence, 393 residues long: Protein TsgA (393 aa).

12 consecutive transmembrane segments (helical) span residues 11–31 (WISF…GMVM), 51–71 (FLNA…EIVP), 78–98 (FGFI…SLAL), 101–121 (AAMF…TFLI), 134–154 (LLFT…VAAF), 162–182 (WYWV…LTFG), 206–226 (IGVL…LGFI), 245–265 (ALVS…SFIL), 273–293 (ILTV…TGTQ), 298–318 (WFIL…ITLG), 332–352 (FILT…GPIV), and 361–381 (LLTA…LGFV).

The protein belongs to the major facilitator superfamily. TsgA family.

The protein resides in the cell inner membrane. The polypeptide is Protein TsgA (Salmonella heidelberg (strain SL476)).